A 98-amino-acid chain; its full sequence is Plastocyanin (98 aa).

The Plastocyanin-like domain occupies 1–98 (AQIVKLGGDD…AGMKMTITVQ (98 aa)). Cu(2+)-binding residues include histidine 38, cysteine 83, histidine 86, and methionine 91.

The protein belongs to the plastocyanin family. Requires Cu(2+) as cofactor.

The protein resides in the plastid. It localises to the chloroplast thylakoid membrane. Its function is as follows. Participates in electron transfer between P700 and the cytochrome b6-f complex in photosystem I. Has antiviral activity against Potato virus Y (strain N). This is Plastocyanin (PETE) from Ulva pertusa (Sea lettuce).